Reading from the N-terminus, the 89-residue chain is Putative ankyrin repeat protein RF_1157 (89 aa).

One copy of the ANK repeat lies at 2–32; the sequence is YNTTPLNFAINQENNEEVIKYLLANGANPRL.

The protein is Putative ankyrin repeat protein RF_1157 of Rickettsia felis (strain ATCC VR-1525 / URRWXCal2) (Rickettsia azadi).